The sequence spans 82 residues: MKILCIFLTFVFTVSCGPSVPQKKTREVAERKRECQLVRGACKPECNSWEYVYYYCNVNPCCAVWEYQKPIINKITSKLHQK.

The N-terminal stretch at 1 to 16 (MKILCIFLTFVFTVSC) is a signal peptide. Intrachain disulfides connect Cys35/Cys61, Cys42/Cys56, and Cys46/Cys62.

Belongs to the beta-defensin family.

It localises to the secreted. Has antibacterial activity. The polypeptide is Beta-defensin 113 (DEFB113) (Homo sapiens (Human)).